The chain runs to 214 residues: Thymidylate kinase (214 aa).

An ATP-binding site is contributed by 15–22 (GLEGAGKT).

The protein belongs to the thymidylate kinase family.

It catalyses the reaction dTMP + ATP = dTDP + ADP. In terms of biological role, phosphorylation of dTMP to form dTDP in both de novo and salvage pathways of dTTP synthesis. The sequence is that of Thymidylate kinase from Haemophilus ducreyi (strain 35000HP / ATCC 700724).